Consider the following 428-residue polypeptide: Phosphoribosylamine--glycine ligase (428 aa).

The ATP-grasp domain occupies 109–316; the sequence is KDFLHRHGIP…LVELCLAALD (208 aa). 135–196 provides a ligand contact to ATP; the sequence is LRQVGAPVVV…EEFLTGEEAS (62 aa). A disordered region spans residues 211-235; that stretch reads SSQDHKARDDGDRGPNTGGMGAYSP. Basic and acidic residues predominate over residues 213-223; the sequence is QDHKARDDGDR. Residues glutamate 286 and asparagine 288 each contribute to the Mg(2+) site.

Belongs to the GARS family. The cofactor is Mg(2+). Mn(2+) is required as a cofactor.

The enzyme catalyses 5-phospho-beta-D-ribosylamine + glycine + ATP = N(1)-(5-phospho-beta-D-ribosyl)glycinamide + ADP + phosphate + H(+). It functions in the pathway purine metabolism; IMP biosynthesis via de novo pathway; N(1)-(5-phospho-D-ribosyl)glycinamide from 5-phospho-alpha-D-ribose 1-diphosphate: step 2/2. The sequence is that of Phosphoribosylamine--glycine ligase (purD) from Allochromatium vinosum (strain ATCC 17899 / DSM 180 / NBRC 103801 / NCIMB 10441 / D) (Chromatium vinosum).